The primary structure comprises 356 residues: GTPase Obg (356 aa).

Residues 1 to 159 (MKFIDRVKIH…RWLRLELKLL (159 aa)) form the Obg domain. One can recognise an OBG-type G domain in the interval 160–331 (ADVGLLGMPN…LVAEVARELE (172 aa)). GTP is bound by residues 166–173 (GMPNAGKS), 191–195 (FTTLV), 213–216 (DIPG), 283–286 (SKID), and 312–314 (SAV). Mg(2+)-binding residues include serine 173 and threonine 193.

The protein belongs to the TRAFAC class OBG-HflX-like GTPase superfamily. OBG GTPase family. In terms of assembly, monomer. The cofactor is Mg(2+).

The protein localises to the cytoplasm. An essential GTPase which binds GTP, GDP and possibly (p)ppGpp with moderate affinity, with high nucleotide exchange rates and a fairly low GTP hydrolysis rate. Plays a role in control of the cell cycle, stress response, ribosome biogenesis and in those bacteria that undergo differentiation, in morphogenesis control. The protein is GTPase Obg of Syntrophotalea carbinolica (strain DSM 2380 / NBRC 103641 / GraBd1) (Pelobacter carbinolicus).